A 405-amino-acid polypeptide reads, in one-letter code: Potassium channel subfamily K member 13 (405 aa).

The Cytoplasmic portion of the chain corresponds to 1–19 (MAGRGCSCSPGHLNEDNAR). Residues 20 to 40 (FLLLAGLILLYLLGGAAVFSA) traverse the membrane as a helical segment. 2 N-linked (GlcNAc...) asparagine glycosylation sites follow: Asn-59 and Asn-65. An intramembrane region (pore-forming) is located at residues 95-115 (WDFTGAFYFVGTVVTTIGFGM). K(+) contacts are provided by Thr-110, Ile-111, and Gly-112. Positions 110–115 (TIGFGM) are selectivity filter 1. Residues 125–145 (VFLIFYGLIGCASTILFFNLF) form a helical membrane-spanning segment. The Cytoplasmic segment spans residues 146–193 (LERLITVIAYVMRTCHHQQLRRRGTVARDNRKAPRKGEADSLAGWKPS). Residues 194–214 (VYYVMLILCLASVAISCGASA) traverse the membrane as a helical segment. The pore-forming intramembrane region spans 224–244 (YFDSVYFCFVASSTIGFGDLV). The K(+) site is built by Thr-237, Ile-238, Gly-239, and Phe-240. Residues 237-242 (TIGFGD) are selectivity filter 2. The helical transmembrane segment at 263-283 (FFILMGVCCIYSMFNVISILI) threads the bilayer. The Cytoplasmic segment spans residues 284–405 (KQTVNWILRK…NRLAETSGDR (122 aa)).

The protein belongs to the two pore domain potassium channel (TC 1.A.1.8) family. As to quaternary structure, homodimer. Heterodimer with KCNK12. As to expression, ubiquitous. In brain expression is rather low and restricted to the olfactory bulb and tubercle, to the ventromedial hypothalamic nucleus, lateral septal nucleus dorsal, lateral mammillary nucleus, lateral parabrachial nuclei, reticular nucleus and reunions nuclei.

It is found in the cell membrane. The catalysed reaction is K(+)(in) = K(+)(out). Its activity is regulated as follows. The channel currents are activated by arachidonic acid, inhibited by volatile anesthetic halothane, partially inhibited by Ba(2+) ions and only weakly inhibited by extracellular acidification to pH 6. Functionally, k(+) channel that conducts outward rectifying tonic currents potentiated by purinergic signals. Homo- and heterodimerizes to form functional channels with distinct regulatory and gating properties. Contributes most of K(+) currents at the plasma membrane of resting microglia. Maintains a depolarized membrane potential required for proper ramified microglia morphology and phagocytosis, selectively mediating microglial pruning of presynaptic compartments at hippocampal excitatory synapses. Upon local release of ATP caused by neuronal injury or infection, it is potentiated by P2RY12 and P2RX7 receptor signaling and contributes to ATP-triggered K(+) efflux underlying microglial NLRP3 inflammasome assembly and IL1B release. In Rattus norvegicus (Rat), this protein is Potassium channel subfamily K member 13.